The following is a 272-amino-acid chain: ATP synthase subunit a (272 aa).

6 helical membrane-spanning segments follow: residues 42-62 (IDSL…AGFV), 108-128 (FVWI…LPCI), 140-162 (ILPS…LMIF), 177-197 (LIYH…LEII), 219-239 (LIFI…LSVP), and 241-261 (AIFH…LTII).

This sequence belongs to the ATPase A chain family. In terms of assembly, F-type ATPases have 2 components, CF(1) - the catalytic core - and CF(0) - the membrane proton channel. CF(1) has five subunits: alpha(3), beta(3), gamma(1), delta(1), epsilon(1). CF(0) has three main subunits: a(1), b(2) and c(9-12). The alpha and beta chains form an alternating ring which encloses part of the gamma chain. CF(1) is attached to CF(0) by a central stalk formed by the gamma and epsilon chains, while a peripheral stalk is formed by the delta and b chains.

The protein resides in the cell inner membrane. Its function is as follows. Key component of the proton channel; it plays a direct role in the translocation of protons across the membrane. This chain is ATP synthase subunit a, found in Blochmanniella floridana.